Here is a 598-residue protein sequence, read N- to C-terminus: 2-succinyl-5-enolpyruvyl-6-hydroxy-3-cyclohexene-1-carboxylate synthase (598 aa).

This sequence belongs to the TPP enzyme family. MenD subfamily. In terms of assembly, homodimer. It depends on Mg(2+) as a cofactor. Requires Mn(2+) as cofactor. Thiamine diphosphate is required as a cofactor.

It carries out the reaction isochorismate + 2-oxoglutarate + H(+) = 5-enolpyruvoyl-6-hydroxy-2-succinyl-cyclohex-3-ene-1-carboxylate + CO2. It functions in the pathway quinol/quinone metabolism; 1,4-dihydroxy-2-naphthoate biosynthesis; 1,4-dihydroxy-2-naphthoate from chorismate: step 2/7. It participates in cofactor biosynthesis; phylloquinone biosynthesis. Its function is as follows. Catalyzes the thiamine diphosphate-dependent decarboxylation of 2-oxoglutarate and the subsequent addition of the resulting succinic semialdehyde-thiamine pyrophosphate anion to isochorismate to yield 2-succinyl-5-enolpyruvyl-6-hydroxy-3-cyclohexene-1-carboxylate (SEPHCHC). The sequence is that of 2-succinyl-5-enolpyruvyl-6-hydroxy-3-cyclohexene-1-carboxylate synthase from Prochlorococcus marinus (strain NATL2A).